Here is a 216-residue protein sequence, read N- to C-terminus: FMN-dependent NADH:quinone oxidoreductase 2 (216 aa).

FMN is bound by residues serine 9, 15-17 (SVS), 96-99 (MYNF), and 140-143 (SRGG).

It belongs to the azoreductase type 1 family. In terms of assembly, homodimer. Requires FMN as cofactor.

The catalysed reaction is 2 a quinone + NADH + H(+) = 2 a 1,4-benzosemiquinone + NAD(+). It catalyses the reaction N,N-dimethyl-1,4-phenylenediamine + anthranilate + 2 NAD(+) = 2-(4-dimethylaminophenyl)diazenylbenzoate + 2 NADH + 2 H(+). Quinone reductase that provides resistance to thiol-specific stress caused by electrophilic quinones. In terms of biological role, also exhibits azoreductase activity. Catalyzes the reductive cleavage of the azo bond in aromatic azo compounds to the corresponding amines. The chain is FMN-dependent NADH:quinone oxidoreductase 2 from Xanthomonas axonopodis pv. citri (strain 306).